The sequence spans 194 residues: ECF RNA polymerase sigma factor SigX (194 aa).

Residues 32–45 carry the Polymerase core binding motif; it reads DLLQEVYIRVLNSY. Positions 136–155 form a DNA-binding region, H-T-H motif; sequence IQETAKALRFSESKVKTTQH.

Belongs to the sigma-70 factor family. ECF subfamily. As to quaternary structure, interacts transiently with the RNAP core.

Its subcellular location is the cell membrane. Sigma factors are initiation factors that promote the attachment of RNA polymerase (RNAP) to specific initiation sites and are then released. May be involved in the regulation of iron metabolism. Associates with RNAP core during early growth phases, association decreases as cells age. The sequence is that of ECF RNA polymerase sigma factor SigX (sigX) from Bacillus subtilis (strain 168).